Here is a 111-residue protein sequence, read N- to C-terminus: Cytochrome c-550 (111 aa).

Positions 13, 16, 17, and 90 each coordinate heme c.

In terms of processing, binds 1 heme c group covalently per subunit.

This Novispirillum itersonii (Aquaspirillum itersonii) protein is Cytochrome c-550.